The chain runs to 292 residues: 4-hydroxybenzoate solanesyltransferase (292 aa).

The next 9 helical transmembrane spans lie at 28–48 (LILM…LPPL), 49–69 (PLLG…CVVN), 97–117 (VGIG…FYLT), 118–138 (PLSF…PGAK), 140–160 (VFPV…LISW), 172–192 (WVLW…YAMA), 217–237 (VGIF…ILML), 239–259 (PLYW…YIQL), and 272–292 (IFGQ…LGWL).

It belongs to the UbiA prenyltransferase family. Requires Mg(2+) as cofactor.

The protein resides in the cell inner membrane. It catalyses the reaction all-trans-nonaprenyl diphosphate + 4-hydroxybenzoate = 4-hydroxy-3-(all-trans-nonaprenyl)benzoate + diphosphate. Catalyzes the prenylation of para-hydroxybenzoate (PHB) with an all-trans polyprenyl group. Mediates the second step in the final reaction sequence of plastoquinone-9 (PQ-9) biosynthesis, which is the condensation of the polyisoprenoid side chain with PHB, generating the first membrane-bound Q intermediate 4-hydroxy-3-solanesylbenzoate. This chain is 4-hydroxybenzoate solanesyltransferase, found in Synechocystis sp. (strain ATCC 27184 / PCC 6803 / Kazusa).